A 269-amino-acid chain; its full sequence is Shikimate dehydrogenase (NADP(+)) (269 aa).

Residues serine 17 to serine 19 and threonine 64 contribute to the shikimate site. Lysine 68 serves as the catalytic Proton acceptor. Glutamate 80 contributes to the NADP(+) binding site. Positions 89 and 105 each coordinate shikimate. NADP(+)-binding positions include glycine 130–alanine 134, asparagine 154–lysine 159, and methionine 213. Tyrosine 215 lines the shikimate pocket. Position 237 (glycine 237) interacts with NADP(+).

This sequence belongs to the shikimate dehydrogenase family. As to quaternary structure, homodimer.

The catalysed reaction is shikimate + NADP(+) = 3-dehydroshikimate + NADPH + H(+). The protein operates within metabolic intermediate biosynthesis; chorismate biosynthesis; chorismate from D-erythrose 4-phosphate and phosphoenolpyruvate: step 4/7. Functionally, involved in the biosynthesis of the chorismate, which leads to the biosynthesis of aromatic amino acids. Catalyzes the reversible NADPH linked reduction of 3-dehydroshikimate (DHSA) to yield shikimate (SA). The sequence is that of Shikimate dehydrogenase (NADP(+)) from Neisseria mucosa.